The following is a 237-amino-acid chain: Putative N-acetylmuramoyl-L-alanine amidase (237 aa).

In terms of domain architecture, MurNAc-LAA spans 7–225; sequence ILIDAGHGGY…IANSIYLGLK (219 aa).

Belongs to the N-acetylmuramoyl-L-alanine amidase 3 family.

It localises to the secreted. It catalyses the reaction Hydrolyzes the link between N-acetylmuramoyl residues and L-amino acid residues in certain cell-wall glycopeptides.. Its function is as follows. Cell-wall hydrolase involved in septum cleavage during cell division. This is Putative N-acetylmuramoyl-L-alanine amidase (amiB) from Buchnera aphidicola subsp. Acyrthosiphon pisum (strain APS) (Acyrthosiphon pisum symbiotic bacterium).